A 688-amino-acid chain; its full sequence is Elongation factor G (688 aa).

Positions 6-280 (KLFRNFGIMA…AVVDFLPSPI (275 aa)) constitute a tr-type G domain. Residues 15 to 22 (AHIDAGKT), 79 to 83 (DTPGH), and 133 to 136 (NKMD) contribute to the GTP site.

Belongs to the TRAFAC class translation factor GTPase superfamily. Classic translation factor GTPase family. EF-G/EF-2 subfamily.

The protein localises to the cytoplasm. Functionally, catalyzes the GTP-dependent ribosomal translocation step during translation elongation. During this step, the ribosome changes from the pre-translocational (PRE) to the post-translocational (POST) state as the newly formed A-site-bound peptidyl-tRNA and P-site-bound deacylated tRNA move to the P and E sites, respectively. Catalyzes the coordinated movement of the two tRNA molecules, the mRNA and conformational changes in the ribosome. The chain is Elongation factor G from Ureaplasma parvum serovar 3 (strain ATCC 27815 / 27 / NCTC 11736).